We begin with the raw amino-acid sequence, 148 residues long: Truncated transcription factor CAULIFLOWER D (148 aa).

Residues 1–61 (MGRGRVEMKR…GKLFEYSSES (61 aa)) enclose the MADS-box domain. Residues 90–148 (QTNWSMEYSRLKAKIELWERNQRHYLGEDLESISIKELQNLEQQLDTSLKHIRSRKVCK) form the K-box; partial domain.

In terms of assembly, homodimer capable of binding to CArG-box sequences.

It is found in the nucleus. Probable transcription factor that promotes early floral meristem identity in synergy with APETALA1, FRUITFULL and LEAFY. Is required subsequently for the transition of an inflorescence meristem into a floral meristem. Seems to be partially redundant to the function of APETALA1. The sequence is that of Truncated transcription factor CAULIFLOWER D (CAL-D) from Brassica oleracea var. botrytis (Cauliflower).